A 493-amino-acid chain; its full sequence is Alpha-amylase-related protein (493 aa).

A signal peptide spans 1-19 (MFKLALTLTLCLAGSLSLA). Gln20 is modified (pyrrolidone carboxylic acid). Residues Cys47 and Cys103 are joined by a disulfide bond. Positions 117, 168, and 177 each coordinate Ca(2+). An intrachain disulfide couples Cys156 to Cys170. A chloride-binding site is contributed by Arg205. Asp207 acts as the Nucleophile in catalysis. A Ca(2+)-binding site is contributed by His211. The active-site Proton donor is Glu244. Chloride-binding residues include Asn307 and Arg342. Intrachain disulfides connect Cys375/Cys381, Cys417/Cys440, and Cys447/Cys459.

The protein belongs to the glycosyl hydrolase 13 family. Monomer. It depends on Ca(2+) as a cofactor. Requires chloride as cofactor.

It is found in the secreted. It carries out the reaction Endohydrolysis of (1-&gt;4)-alpha-D-glucosidic linkages in polysaccharides containing three or more (1-&gt;4)-alpha-linked D-glucose units.. The chain is Alpha-amylase-related protein (Amyrel) from Drosophila yakuba (Fruit fly).